Reading from the N-terminus, the 454-residue chain is UDP-N-acetylmuramoylalanine--D-glutamate ligase (454 aa).

117-123 (GTNGKTT) is an ATP binding site.

The protein belongs to the MurCDEF family.

It localises to the cytoplasm. It carries out the reaction UDP-N-acetyl-alpha-D-muramoyl-L-alanine + D-glutamate + ATP = UDP-N-acetyl-alpha-D-muramoyl-L-alanyl-D-glutamate + ADP + phosphate + H(+). Its pathway is cell wall biogenesis; peptidoglycan biosynthesis. Its function is as follows. Cell wall formation. Catalyzes the addition of glutamate to the nucleotide precursor UDP-N-acetylmuramoyl-L-alanine (UMA). In Alkaliphilus oremlandii (strain OhILAs) (Clostridium oremlandii (strain OhILAs)), this protein is UDP-N-acetylmuramoylalanine--D-glutamate ligase.